The primary structure comprises 569 residues: MATKGLNMDDLDLLLADLGRPKSSIKVTATVQTTATPSSGKNFDNSDIQNEIQSIIEELDQQPQTVQTISTPAPKNHNTTTTTASFSVSSQPAPQPPQQSQQIDGLDDLDELMESLNTSISTALKAVPTTPEEHITHANSNSPPPSLHKNTSSTNSASSLSRPNNNPSVVSTPQPGKVTSTATITTKKQPALSKATLETTSGNNVYSSQPSQSQPQPYKVTATNSQPSSDDLDELLKGLSPSTTTTTTVPPPVQRDQHQHHHQHQHHHHHNPNHNQTQTVTTQINIGRTNTPNNNNNNNTNSPKVVHGDDLDNLLNNLTSQVKDIDSTGPTSRGTCGGCRKPIFGETIQAMGKFYHPEHFCCHNCQNPLGTKNYYEQESLPHCEKCYQELFCARCAHCDEPISDRCITALGKKWHVHHFVCTQCLKPFEGGNFFERDGRPYCEADFYSTFAVRCGGCNSPIRGECINALGTQWHPEHFVCQYCQKSFTNGQFFEFGGKPYCDVHYHQQAGSVCSGCGKAVSGRCVDALDKKWHPEHFVCAFCMNPLAGGSYTANNGKPYCKGCHNKLFA.

The LD motif 1 motif lies at 10-18 (DLDLLLADL). Residues 62-78 (QPQTVQTISTPAPKNHN) show a composition bias toward polar residues. The tract at residues 62 to 103 (QPQTVQTISTPAPKNHNTTTTTASFSVSSQPAPQPPQQSQQI) is disordered. A compositionally biased stretch (low complexity) spans 79–102 (TTTTTASFSVSSQPAPQPPQQSQQ). Positions 106-112 (LDDLDEL) match the LD motif 2 motif. A disordered region spans residues 129–311 (TTPEEHITHA…SPKVVHGDDL (183 aa)). The span at 150 to 161 (NTSSTNSASSLS) shows a compositional bias: low complexity. Polar residues-rich tracts occupy residues 162–188 (RPNNNPSVVSTPQPGKVTSTATITTKK) and 196–206 (TLETTSGNNVY). Residues 207–217 (SSQPSQSQPQP) are compositionally biased toward low complexity. An LD motif 3 motif is present at residues 232-239 (LDELLKGL). Positions 258 to 272 (HQHHHQHQHHHHHNP) are enriched in basic residues. Positions 273-301 (NHNQTQTVTTQINIGRTNTPNNNNNNNTN) are enriched in low complexity. Residues 311–318 (LDNLLNNL) carry the LD motif 4 motif. 4 consecutive LIM zinc-binding domains span residues 334–391 (GTCG…QELF), 393–452 (ARCA…TFAV), 453–510 (RCGG…QQAG), and 511–569 (SVCS…KLFA).

It belongs to the paxillin family. As to expression, expressed in the upper and lower cup of the fruiting body.

Its subcellular location is the cytoplasm. The protein localises to the cell cortex. It is found in the cell projection. It localises to the filopodium. The protein resides in the cell junction. Its subcellular location is the focal adhesion. The protein localises to the cytoskeleton. In terms of biological role, required for cell-substrate adhesion, cell sorting, slug migration, and cell differentiation. May function upstream of limB. The protein is Paxillin-B (paxB) of Dictyostelium discoideum (Social amoeba).